Here is a 426-residue protein sequence, read N- to C-terminus: Egl nine homolog 1 (426 aa).

Ala-2 is subject to N-acetylalanine. The segment at 6–20 (GGPGGPSPSERDRQY) is required for nuclear export. At Ser-12 the chain carries Phosphoserine. Cys-21, Cys-24, Cys-33, Cys-36, Cys-42, His-46, His-54, and Cys-58 together coordinate Zn(2+). The MYND-type; atypical zinc-finger motif lies at 21–58 (CELCGKMENLLRCSRCRSSFYCCKEHQRQDWKKHKLVC). Disordered regions lie at residues 65–129 (LGHG…PCRA) and 160–184 (ANLYPPSNTPGDALSPGGGLRPNGQ). Over residues 77-87 (PAPPAAVPPPR) the composition is skewed to pro residues. The segment covering 89–103 (GAREPRKAAARRDNA) has biased composition (basic and acidic residues). Residues 120-129 (PAAAASPCRA) are compositionally biased toward low complexity. Ser-125 bears the Phosphoserine mark. Residues Cys-201 and Cys-208 each carry the S-nitrosocysteine modification. A beta(2)beta(3) 'finger-like' loop region spans residues 241–251 (VSQKSDSSKDI). One can recognise a Fe2OG dioxygenase domain in the interval 291–392 (KINGRTKAMV…RYAITVWYFD (102 aa)). An S-nitrosocysteine modification is found at Cys-302. Fe cation is bound by residues His-313 and Asp-315. Residues Cys-323 and Cys-326 each carry the S-nitrosocysteine modification. His-374 provides a ligand contact to Fe cation. Position 383 (Arg-383) interacts with 2-oxoglutarate.

Monomer. Interacts with ING4; the interaction inhibits the hydroxylation of HIF alpha proteins. Interacts with PTGES3 (via PXLE motif); thereby recruiting EGLN1 to the HSP90 pathway to facilitate HIF alpha proteins hydroxylation. Interacts with LIMD1. Found in a complex composed of LIMD1, VHL, EGLN1/PHD2, ELOB and CUL2. Interacts with EPAS1. Interacts with CBFA2T3. Interacts with HIF1A. It depends on Fe(2+) as a cofactor. L-ascorbate serves as cofactor. S-nitrosylation inhibits the enzyme activity up to 60% under aerobic conditions. Chelation of Fe(2+) has no effect on the S-nitrosylation. It is uncertain whether nitrosylation occurs on Cys-323 or Cys-326. In terms of tissue distribution, according to PubMed:11056053, widely expressed with highest levels in skeletal muscle and heart, moderate levels in pancreas, brain (dopaminergic neurons of adult and fetal substantia nigra) and kidney, and lower levels in lung and liver. According to PubMed:12351678 widely expressed with highest levels in brain, kidney and adrenal gland. Expressed in cardiac myocytes, aortic endothelial cells and coronary artery smooth muscle. According to PubMed:12788921; expressed in adult and fetal heart, brain, liver, lung, skeletal muscle and kidney. Also expressed in placenta. Highest levels in adult heart, brain, lung and liver and fetal brain, heart spleen and skeletal muscle.

The protein resides in the cytoplasm. It is found in the nucleus. The catalysed reaction is L-prolyl-[hypoxia-inducible factor alpha subunit] + 2-oxoglutarate + O2 = trans-4-hydroxy-L-prolyl-[hypoxia-inducible factor alpha subunit] + succinate + CO2. With respect to regulation, following exposure to hypoxia, activated in HeLa cells but not in cardiovascular cells. In terms of biological role, cellular oxygen sensor that catalyzes, under normoxic conditions, the post-translational formation of 4-hydroxyproline in hypoxia-inducible factor (HIF) alpha proteins. Hydroxylates a specific proline found in each of the oxygen-dependent degradation (ODD) domains (N-terminal, NODD, and C-terminal, CODD) of HIF1A. Also hydroxylates HIF2A. Has a preference for the CODD site for both HIF1A and HIF1B. Hydroxylated HIFs are then targeted for proteasomal degradation via the von Hippel-Lindau ubiquitination complex. Under hypoxic conditions, the hydroxylation reaction is attenuated allowing HIFs to escape degradation resulting in their translocation to the nucleus, heterodimerization with HIF1B, and increased expression of hypoxy-inducible genes. EGLN1 is the most important isozyme under normoxia and, through regulating the stability of HIF1, involved in various hypoxia-influenced processes such as angiogenesis in retinal and cardiac functionality. Target proteins are preferentially recognized via a LXXLAP motif. This Homo sapiens (Human) protein is Egl nine homolog 1.